A 347-amino-acid chain; its full sequence is Protein RecA (347 aa).

65 to 72 (GPESSGKT) contacts ATP.

It belongs to the RecA family.

The protein localises to the cytoplasm. Can catalyze the hydrolysis of ATP in the presence of single-stranded DNA, the ATP-dependent uptake of single-stranded DNA by duplex DNA, and the ATP-dependent hybridization of homologous single-stranded DNAs. It interacts with LexA causing its activation and leading to its autocatalytic cleavage. The sequence is that of Protein RecA from Stutzerimonas stutzeri (Pseudomonas stutzeri).